The primary structure comprises 101 residues: Small ribosomal subunit protein uS14 (101 aa).

Positions 1–10 are enriched in basic and acidic residues; the sequence is MAKKSSIEKN. Positions 1–25 are disordered; it reads MAKKSSIEKNNRRKKMAKNAAPKRE.

It belongs to the universal ribosomal protein uS14 family. In terms of assembly, part of the 30S ribosomal subunit. Contacts proteins S3 and S10.

Functionally, binds 16S rRNA, required for the assembly of 30S particles and may also be responsible for determining the conformation of the 16S rRNA at the A site. The polypeptide is Small ribosomal subunit protein uS14 (Rhodopseudomonas palustris (strain BisA53)).